The following is a 101-amino-acid chain: Small ribosomal subunit protein uS14 (101 aa).

Belongs to the universal ribosomal protein uS14 family. As to quaternary structure, part of the 30S ribosomal subunit. Contacts proteins S3 and S10.

Functionally, binds 16S rRNA, required for the assembly of 30S particles and may also be responsible for determining the conformation of the 16S rRNA at the A site. This Klebsiella pneumoniae (strain 342) protein is Small ribosomal subunit protein uS14.